We begin with the raw amino-acid sequence, 155 residues long: Ribosomal RNA large subunit methyltransferase H (155 aa).

Residues L72, G103, and L122–L127 each bind S-adenosyl-L-methionine.

The protein belongs to the RNA methyltransferase RlmH family. In terms of assembly, homodimer.

Its subcellular location is the cytoplasm. It catalyses the reaction pseudouridine(1915) in 23S rRNA + S-adenosyl-L-methionine = N(3)-methylpseudouridine(1915) in 23S rRNA + S-adenosyl-L-homocysteine + H(+). Specifically methylates the pseudouridine at position 1915 (m3Psi1915) in 23S rRNA. In Cronobacter sakazakii (strain ATCC BAA-894) (Enterobacter sakazakii), this protein is Ribosomal RNA large subunit methyltransferase H.